Here is a 181-residue protein sequence, read N- to C-terminus: MSIYGDYIKSVIRTVPDWPQPGVNFRDITPVLQNSAAFRKLIDSFVHRYQELNLDAIAAIDARGFIIGAPVAYELGCSFVPVRKKGKLPFKTISETYTLEYGASTVELHSDAFREGDRILVMDDLIATGGTMLAAASLIQRSGGQVVETATIIDLPELGGAQKIRDAGHGVFAVCTFTENE.

Belongs to the purine/pyrimidine phosphoribosyltransferase family. As to quaternary structure, homodimer.

The protein resides in the cytoplasm. The catalysed reaction is AMP + diphosphate = 5-phospho-alpha-D-ribose 1-diphosphate + adenine. The protein operates within purine metabolism; AMP biosynthesis via salvage pathway; AMP from adenine: step 1/1. Its function is as follows. Catalyzes a salvage reaction resulting in the formation of AMP, that is energically less costly than de novo synthesis. The chain is Adenine phosphoribosyltransferase from Chromohalobacter salexigens (strain ATCC BAA-138 / DSM 3043 / CIP 106854 / NCIMB 13768 / 1H11).